Reading from the N-terminus, the 608-residue chain is Phosphogluconate dehydratase (608 aa).

The [4Fe-4S] cluster site is built by Cys-154 and Cys-221.

This sequence belongs to the IlvD/Edd family. Requires [4Fe-4S] cluster as cofactor.

It carries out the reaction 6-phospho-D-gluconate = 2-dehydro-3-deoxy-6-phospho-D-gluconate + H2O. It functions in the pathway carbohydrate metabolism; Entner-Doudoroff pathway. Functionally, catalyzes the dehydration of 6-phospho-D-gluconate to 2-dehydro-3-deoxy-6-phospho-D-gluconate. The chain is Phosphogluconate dehydratase from Pseudomonas aeruginosa (strain ATCC 15692 / DSM 22644 / CIP 104116 / JCM 14847 / LMG 12228 / 1C / PRS 101 / PAO1).